The primary structure comprises 82 residues: MNNSIPERFIFQCALFKNLEREVFMTHGYVDSHIIDQALRLRLKDETSVILSDLYLQILQYIEMHKTTLTDIIINDRESVLS.

This is an uncharacterized protein from Escherichia coli (strain K12).